A 265-amino-acid chain; its full sequence is Transcription factor BHLH062 (265 aa).

Positions 1–26 are disordered; sequence MVPRDRVNAAAAGGGGEGRLVQSGIV. Residues 35 to 48 form a basic motif; degenerate region; sequence PKRIHKSEREKLKR. Residues 35–85 form the bHLH domain; sequence PKRIHKSEREKLKRDKQNDLFNELGNLLEPDRQNNGKACVLGETTRILKDL. The tract at residues 49-85 is helix-loop-helix motif; sequence DKQNDLFNELGNLLEPDRQNNGKACVLGETTRILKDL. Residues 75-130 adopt a coiled-coil conformation; sequence LGETTRILKDLLSQVESLRKENSSLKNESHYVALERNELHDDNSMLRTEILELQNE. Residues 200-265 are disordered; the sequence is ESATSEDSEP…TNEEDRIGRS (66 aa). Over residues 210-220 the composition is skewed to basic and acidic residues; it reads SQEHGISDHVT. A compositionally biased stretch (polar residues) spans 245 to 256; that stretch reads QDQQCSSGTSGT.

It belongs to the bHLH protein family. As to quaternary structure, interacts with TIFY11A/JAZ9.

It localises to the nucleus. Transcription factor that plays a positive role in salt stress tolerance. Interacts with TIFY11A/JAZ9 and binds to the promoter of some potassium ion transporter genes to regulate potassium homeostasis during salt stress. The sequence is that of Transcription factor BHLH062 from Oryza sativa subsp. japonica (Rice).